The primary structure comprises 189 residues: Holliday junction branch migration complex subunit RuvA (189 aa).

Residues 1 to 62 (MIVALKGNIE…EEAWSLYGFA (62 aa)) are domain I. The segment at 63-138 (EEAEKRVFDT…FSLSLQEGSK (76 aa)) is domain II. Positions 138–139 (KA) are flexible linker. The segment at 140–189 (STPPVFEESRLALESLGFKSELIAKALQNIQATTTQEIIKEALKKLQTLR) is domain III.

It belongs to the RuvA family. In terms of assembly, homotetramer. Forms an RuvA(8)-RuvB(12)-Holliday junction (HJ) complex. HJ DNA is sandwiched between 2 RuvA tetramers; dsDNA enters through RuvA and exits via RuvB. An RuvB hexamer assembles on each DNA strand where it exits the tetramer. Each RuvB hexamer is contacted by two RuvA subunits (via domain III) on 2 adjacent RuvB subunits; this complex drives branch migration. In the full resolvosome a probable DNA-RuvA(4)-RuvB(12)-RuvC(2) complex forms which resolves the HJ.

It is found in the cytoplasm. Functionally, the RuvA-RuvB-RuvC complex processes Holliday junction (HJ) DNA during genetic recombination and DNA repair, while the RuvA-RuvB complex plays an important role in the rescue of blocked DNA replication forks via replication fork reversal (RFR). RuvA specifically binds to HJ cruciform DNA, conferring on it an open structure. The RuvB hexamer acts as an ATP-dependent pump, pulling dsDNA into and through the RuvAB complex. HJ branch migration allows RuvC to scan DNA until it finds its consensus sequence, where it cleaves and resolves the cruciform DNA. The chain is Holliday junction branch migration complex subunit RuvA from Wolinella succinogenes (strain ATCC 29543 / DSM 1740 / CCUG 13145 / JCM 31913 / LMG 7466 / NCTC 11488 / FDC 602W) (Vibrio succinogenes).